We begin with the raw amino-acid sequence, 170 residues long: Ribosome maturation factor RimM (170 aa).

The PRC barrel domain maps to Lys92–Leu163.

The protein belongs to the RimM family. Binds ribosomal protein uS19.

It localises to the cytoplasm. In terms of biological role, an accessory protein needed during the final step in the assembly of 30S ribosomal subunit, possibly for assembly of the head region. Essential for efficient processing of 16S rRNA. May be needed both before and after RbfA during the maturation of 16S rRNA. It has affinity for free ribosomal 30S subunits but not for 70S ribosomes. The polypeptide is Ribosome maturation factor RimM (Desulfitobacterium hafniense (strain Y51)).